A 185-amino-acid polypeptide reads, in one-letter code: Ribosome-recycling factor (185 aa).

Belongs to the RRF family.

The protein resides in the cytoplasm. Functionally, responsible for the release of ribosomes from messenger RNA at the termination of protein biosynthesis. May increase the efficiency of translation by recycling ribosomes from one round of translation to another. The sequence is that of Ribosome-recycling factor from Haemophilus influenzae (strain 86-028NP).